The chain runs to 470 residues: Cysteine--tRNA ligase (470 aa).

C27 lines the Zn(2+) pocket. The 'HIGH' region signature appears at 29 to 39 (PTVYNYIHIGN). Zn(2+) contacts are provided by C207, H232, and E236. A 'KMSKS' region motif is present at residues 264–268 (KMSKS). Residue K267 coordinates ATP.

This sequence belongs to the class-I aminoacyl-tRNA synthetase family. Monomer. Requires Zn(2+) as cofactor.

It is found in the cytoplasm. It carries out the reaction tRNA(Cys) + L-cysteine + ATP = L-cysteinyl-tRNA(Cys) + AMP + diphosphate. This Lachnoclostridium phytofermentans (strain ATCC 700394 / DSM 18823 / ISDg) (Clostridium phytofermentans) protein is Cysteine--tRNA ligase.